Reading from the N-terminus, the 223-residue chain is Deoxyribose-phosphate aldolase (223 aa).

Catalysis depends on D89, which acts as the Proton donor/acceptor. Catalysis depends on K152, which acts as the Schiff-base intermediate with acetaldehyde. K181 functions as the Proton donor/acceptor in the catalytic mechanism.

This sequence belongs to the DeoC/FbaB aldolase family. DeoC type 1 subfamily.

It is found in the cytoplasm. The enzyme catalyses 2-deoxy-D-ribose 5-phosphate = D-glyceraldehyde 3-phosphate + acetaldehyde. It participates in carbohydrate degradation; 2-deoxy-D-ribose 1-phosphate degradation; D-glyceraldehyde 3-phosphate and acetaldehyde from 2-deoxy-alpha-D-ribose 1-phosphate: step 2/2. Functionally, catalyzes a reversible aldol reaction between acetaldehyde and D-glyceraldehyde 3-phosphate to generate 2-deoxy-D-ribose 5-phosphate. The polypeptide is Deoxyribose-phosphate aldolase (Bacillus cereus (strain ZK / E33L)).